The following is a 251-amino-acid chain: Phosphate import ATP-binding protein PstB (251 aa).

In terms of domain architecture, ABC transporter spans 5–246 (FDIRNFSVYY…PEKELTEKYL (242 aa)). 37–44 (GPSGCGKS) lines the ATP pocket.

The protein belongs to the ABC transporter superfamily. Phosphate importer (TC 3.A.1.7) family. The complex is composed of two ATP-binding proteins (PstB), two transmembrane proteins (PstC and PstA) and a solute-binding protein (PstS).

It localises to the cell membrane. It carries out the reaction phosphate(out) + ATP + H2O = ADP + 2 phosphate(in) + H(+). In terms of biological role, part of the ABC transporter complex PstSACB involved in phosphate import. Responsible for energy coupling to the transport system. In Archaeoglobus fulgidus (strain ATCC 49558 / DSM 4304 / JCM 9628 / NBRC 100126 / VC-16), this protein is Phosphate import ATP-binding protein PstB.